The primary structure comprises 356 residues: Guanine nucleotide-binding protein alpha-17 subunit (356 aa).

Residue Gly2 is the site of N-myristoyl glycine attachment. A lipid anchor (S-palmitoyl cysteine) is attached at Cys4. Residues 32–356 (SIVKLLLLGA…QKNLQKAGMM (325 aa)) enclose the G-alpha domain. Residues 35–48 (KLLLLGAGECGKST) form a G1 motif region. Residues 40 to 47 (GAGECGKS), 177 to 183 (LYSRVAT), 202 to 206 (DVGGQ), 271 to 274 (NKKD), and Ala328 contribute to the GTP site. Mg(2+) contacts are provided by Ser47 and Thr183. The G2 motif stretch occupies residues 175–183 (DILYSRVAT). The segment at 198 to 207 (FRVFDVGGQR) is G3 motif. The interval 267-274 (ILFMNKKD) is G4 motif. Positions 326–331 (TCATDT) are G5 motif.

This sequence belongs to the G-alpha family. In terms of assembly, g proteins are composed of 3 units; alpha, beta and gamma. The alpha chain contains the guanine nucleotide binding site.

It localises to the cell projection. It is found in the cilium. Its subcellular location is the dendrite. Functionally, guanine nucleotide-binding proteins (G proteins) are involved as modulators or transducers in various transmembrane signaling systems. This specific G-alpha subunit plays an important role in olfaction and in cilia morphogenesis. Involved in chemotactic responses to attractants diacetyl, pyrazine, 2,4,5-trimethylthiazole, benzaldehyde, isoamyl alcohol, butanone and 2,3-pentanedione. Displays a redundant function with gpa-3 in chemotactic responses. Involved in avoidance responses to copper, sodium dodecyl sulfate and linoleic acid. Involved in osmotic avoidance and mechanosensory responses. Involved in specifying fan-like morphology of cilia of head sensory neurons AWC. The chain is Guanine nucleotide-binding protein alpha-17 subunit (odr-3) from Caenorhabditis briggsae.